Here is a 452-residue protein sequence, read N- to C-terminus: NADH-cytochrome b5 reductase-like protein alnC (452 aa).

Residues 4-80 (PASITLAEVA…LKTLLVGSLQ (77 aa)) form the Cytochrome b5 heme-binding domain. Residue 33-38 (AEYRED) participates in FMN binding. Heme-binding residues include H39 and H63. FMN contacts are provided by residues 80-83 (QSKT) and 116-125 (NDTSKYGQLP). Transmembrane regions (helical) follow at residues 120–140 (KYGQLPSLVLAGGLALLFFTL) and 166–186 (VGFLGGFLTATTLNTAAATFV). The 100-residue stretch at 225–324 (NTQQFLTLVD…RGPFGRYSPS (100 aa)) folds into the FAD-binding FR-type domain. FAD is bound at residue 302-305 (YLLN). NADP(+) is bound by residues 389 to 390 (GQ) and 395 to 399 (WKGLR).

It belongs to the flavoprotein pyridine nucleotide cytochrome reductase family. The cofactor is FAD. FMN is required as a cofactor.

The protein localises to the membrane. It functions in the pathway polyketide biosynthesis. Functionally, NADH-cytochrome b5 reductase-like protein; part of the gene cluster that mediates the biosynthesis of asperlin, a polyketide showing anti-inflammatory, antitumor and antibiotic activities. The first step of the asperlin biosynthesis is the production of the intermediate 2,4,6-octatrienoic acid by the highly redusing polyketide synthase alnA with cleavage of the PKS product by the esterase alnB. 2,4,6-octatrienoic acid is further converted to asperlin via several steps involving the remaining enzymes from the cluster. The sequence is that of NADH-cytochrome b5 reductase-like protein alnC from Emericella nidulans (strain FGSC A4 / ATCC 38163 / CBS 112.46 / NRRL 194 / M139) (Aspergillus nidulans).